Consider the following 88-residue polypeptide: Small ribosomal subunit protein bS20 (88 aa).

Residues 1–27 (MANSKTAKKRAIQSEKRRQHNASRRSM) are disordered.

Belongs to the bacterial ribosomal protein bS20 family.

In terms of biological role, binds directly to 16S ribosomal RNA. This chain is Small ribosomal subunit protein bS20, found in Shewanella amazonensis (strain ATCC BAA-1098 / SB2B).